The chain runs to 325 residues: Porphobilinogen deaminase (325 aa).

Residue Cys253 is modified to S-(dipyrrolylmethanemethyl)cysteine.

It belongs to the HMBS family. Dipyrromethane serves as cofactor.

It catalyses the reaction 4 porphobilinogen + H2O = hydroxymethylbilane + 4 NH4(+). Its pathway is porphyrin-containing compound metabolism; protoporphyrin-IX biosynthesis; coproporphyrinogen-III from 5-aminolevulinate: step 2/4. Tetrapolymerization of the monopyrrole PBG into the hydroxymethylbilane pre-uroporphyrinogen in several discrete steps. In Dictyostelium discoideum (Social amoeba), this protein is Porphobilinogen deaminase (hemC).